The sequence spans 196 residues: Transmembrane protein 52 (196 aa).

The N-terminal stretch at 1-28 is a signal peptide; the sequence is MAPGPSATQGILLLLPLLPLSQVTLGSA. The chain crosses the membrane as a helical span at residues 47-67; it reads LWHVGLILLAILLMLLCGVTA. The tract at residues 162–196 is disordered; sequence EEVAAPSEKTNSLPEALEPETTGGPQEPGPSAQRP.

It is found in the membrane. The polypeptide is Transmembrane protein 52 (Tmem52) (Mus musculus (Mouse)).